The sequence spans 327 residues: Tartrate-resistant acid phosphatase type 5 (327 aa).

The signal sequence occupies residues 1–22 (MDSWVVLLGLQIIWLPLLTHGT). Aspartate 35, aspartate 73, tyrosine 76, and asparagine 112 together coordinate Fe cation. Asparagine 118 and asparagine 149 each carry an N-linked (GlcNAc...) asparagine glycan. Cysteine 163 and cysteine 221 are disulfide-bonded. Histidine 207, histidine 242, and histidine 244 together coordinate Fe cation.

As to quaternary structure, exists either as monomer or, after proteolytic processing, as a dimer of two chains linked by disulfide bond(s). The cofactor is Fe cation. As to expression, characteristic constituent of osteoclasts.

The protein resides in the lysosome. It catalyses the reaction a phosphate monoester + H2O = an alcohol + phosphate. In terms of biological role, may play a role in the process of bone resorption. The osteoclastic trap acts on nucleotide tri- and diphosphates with higher affinity, compared with other substrates. This chain is Tartrate-resistant acid phosphatase type 5 (Acp5), found in Mus musculus (Mouse).